Consider the following 53-residue polypeptide: UPF0391 membrane protein ECA0470 (53 aa).

Transmembrane regions (helical) follow at residues 4 to 24 (WGIIFLVIALIAAALGFGGLA) and 30 to 47 (AAKIVFVVGIILFLVSLF).

Belongs to the UPF0391 family.

The protein resides in the cell membrane. The sequence is that of UPF0391 membrane protein ECA0470 from Pectobacterium atrosepticum (strain SCRI 1043 / ATCC BAA-672) (Erwinia carotovora subsp. atroseptica).